A 508-amino-acid chain; its full sequence is Light-independent protochlorophyllide reductase subunit B (508 aa).

D36 is a binding site for [4Fe-4S] cluster. D294 serves as the catalytic Proton donor. 429 to 430 contacts substrate; the sequence is GM.

Belongs to the ChlB/BchB/BchZ family. Protochlorophyllide reductase is composed of three subunits; ChlL, ChlN and ChlB. Forms a heterotetramer of two ChlB and two ChlN subunits. [4Fe-4S] cluster is required as a cofactor.

The catalysed reaction is chlorophyllide a + oxidized 2[4Fe-4S]-[ferredoxin] + 2 ADP + 2 phosphate = protochlorophyllide a + reduced 2[4Fe-4S]-[ferredoxin] + 2 ATP + 2 H2O. The protein operates within porphyrin-containing compound metabolism; chlorophyll biosynthesis (light-independent). Functionally, component of the dark-operative protochlorophyllide reductase (DPOR) that uses Mg-ATP and reduced ferredoxin to reduce ring D of protochlorophyllide (Pchlide) to form chlorophyllide a (Chlide). This reaction is light-independent. The NB-protein (ChlN-ChlB) is the catalytic component of the complex. The sequence is that of Light-independent protochlorophyllide reductase subunit B from Rippkaea orientalis (strain PCC 8801 / RF-1) (Cyanothece sp. (strain PCC 8801)).